Here is a 574-residue protein sequence, read N- to C-terminus: Streptolysin O (574 aa).

The N-terminal stretch at 1 to 36 is a signal peptide; that stretch reads MKDMSNKKIFKKYSRVAGLLTAALIVGNLVTANADS. A compositionally biased stretch (low complexity) spans 37-52; that stretch reads NKQNTANTETTTTNEQ. 2 disordered regions span residues 37-64 and 84-111; these read NKQN…TTEK and KEMP…HTEE. Residues 53 to 64 are compositionally biased toward basic and acidic residues; it reads PKPESSELTTEK. 4 consecutive transmembrane segments (beta stranded) span residues 263 to 276, 283 to 292, 361 to 370, and 378 to 390; these read KSQI…NSKI, IDFKSISKGE, SNDVEAAFSA, and KTNG…LENS. Positions 532-542 match the Conserved undecapeptide motif; the sequence is ECTGLAWEWWR. Residues 564–565 carry the Cholesterol binding motif; that stretch reads TL.

This sequence belongs to the cholesterol-dependent cytolysin family. Homooligomeric pore complex of 35 to 50 subunits; when inserted in the host membrane.

The protein localises to the secreted. It is found in the host cell membrane. Its function is as follows. A cholesterol-dependent toxin that causes cytolysis by forming pores in cholesterol containing host membranes. After binding to target membranes, the protein undergoes a major conformation change, leading to its insertion in the host membrane and formation of an oligomeric pore complex. Cholesterol is required for binding to host membranes, membrane insertion and pore formation; cholesterol binding is mediated by a Thr-Leu pair in the C-terminus. Can be reversibly inactivated by oxidation. The chain is Streptolysin O (slo) from Streptococcus canis.